The sequence spans 216 residues: Protein-methionine-sulfoxide reductase heme-binding subunit MsrQ (216 aa).

Helical transmembrane passes span 16 to 36, 48 to 68, 82 to 102, 119 to 139, and 155 to 175; these read IWAL…LGAT, EHLL…ITPI, ALGL…MVLD, FITI…TSNI, and LVYV…KVVG.

This sequence belongs to the MsrQ family. In terms of assembly, heterodimer of a catalytic subunit (MsrP) and a heme-binding subunit (MsrQ). FMN serves as cofactor. It depends on heme b as a cofactor.

Its subcellular location is the cell inner membrane. Part of the MsrPQ system that repairs oxidized periplasmic proteins containing methionine sulfoxide residues (Met-O), using respiratory chain electrons. Thus protects these proteins from oxidative-stress damage caused by reactive species of oxygen and chlorine generated by the host defense mechanisms. MsrPQ is essential for the maintenance of envelope integrity under bleach stress, rescuing a wide series of structurally unrelated periplasmic proteins from methionine oxidation. MsrQ provides electrons for reduction to the reductase catalytic subunit MsrP, using the quinone pool of the respiratory chain. This chain is Protein-methionine-sulfoxide reductase heme-binding subunit MsrQ, found in Rhizobium meliloti (strain 1021) (Ensifer meliloti).